The primary structure comprises 75 residues: Putative DNA-directed RNA polymerase subunit omega (75 aa).

This sequence belongs to the RNA polymerase subunit omega family.

The protein localises to the plastid. It localises to the chloroplast. The enzyme catalyses RNA(n) + a ribonucleoside 5'-triphosphate = RNA(n+1) + diphosphate. Its function is as follows. May be involved in RNA polymerase activity. The chain is Putative DNA-directed RNA polymerase subunit omega from Pyropia yezoensis (Susabi-nori).